The sequence spans 290 residues: Large ribosomal subunit protein uL2m (290 aa).

This sequence belongs to the universal ribosomal protein uL2 family. As to quaternary structure, probably part of the large ribosomal subunit.

The protein resides in the hydrogenosome. This Nyctotherus ovalis protein is Large ribosomal subunit protein uL2m (rpl2).